A 207-amino-acid polypeptide reads, in one-letter code: 3-isopropylmalate dehydratase small subunit (207 aa).

This sequence belongs to the LeuD family. LeuD type 1 subfamily. In terms of assembly, heterodimer of LeuC and LeuD.

The catalysed reaction is (2R,3S)-3-isopropylmalate = (2S)-2-isopropylmalate. Its pathway is amino-acid biosynthesis; L-leucine biosynthesis; L-leucine from 3-methyl-2-oxobutanoate: step 2/4. In terms of biological role, catalyzes the isomerization between 2-isopropylmalate and 3-isopropylmalate, via the formation of 2-isopropylmaleate. This chain is 3-isopropylmalate dehydratase small subunit, found in Rhodospirillum rubrum (strain ATCC 11170 / ATH 1.1.1 / DSM 467 / LMG 4362 / NCIMB 8255 / S1).